The chain runs to 547 residues: Putative HMP/thiamine import ATP-binding protein YkoD (547 aa).

ABC transporter domains follow at residues 8–250 (LTVE…KLGI) and 295–523 (LEVS…KAKL). Residues 42 to 49 (GPSGCGKS) and 327 to 334 (GPNGTGKS) contribute to the ATP site.

It belongs to the ABC transporter superfamily. As to quaternary structure, the complex is composed of two ATP-binding proteins (YkoD), two transmembrane proteins (YkoC and YkoE) and a solute-binding protein (YkoF).

It localises to the cell membrane. Its function is as follows. Part of the ABC transporter complex YkoCDEF that could transport hydroxymethylpyrimidine (HMP) and/or thiamine. Could also transport other HMP-containing products. Responsible for energy coupling to the transport system. The sequence is that of Putative HMP/thiamine import ATP-binding protein YkoD (ykoD) from Bacillus subtilis (strain 168).